The primary structure comprises 247 residues: MERGRLVYEGKAKSLYEHPEDENLLVMEFRDDITAFNMEKMDTVEGKGVYNCLISARLFEVLEDAGIPTHYVELADERRMVVERLDMFNLEVICRNMATGSLVERLPFEEGEKLDPPIVEFDYKSDEYGDPMVNMDHIRALGLATEEEVERMRELTLQVNEVLSEFLKDCDIILVDFKLEFGVNPDGEVVVGDEISPDTCRFWDAETEESLDKDIFRKDEGDVLAGYREAAERILRGDEEKLAMLPG.

It belongs to the SAICAR synthetase family.

The catalysed reaction is 5-amino-1-(5-phospho-D-ribosyl)imidazole-4-carboxylate + L-aspartate + ATP = (2S)-2-[5-amino-1-(5-phospho-beta-D-ribosyl)imidazole-4-carboxamido]succinate + ADP + phosphate + 2 H(+). It participates in purine metabolism; IMP biosynthesis via de novo pathway; 5-amino-1-(5-phospho-D-ribosyl)imidazole-4-carboxamide from 5-amino-1-(5-phospho-D-ribosyl)imidazole-4-carboxylate: step 1/2. This chain is Phosphoribosylaminoimidazole-succinocarboxamide synthase, found in Methanopyrus kandleri (strain AV19 / DSM 6324 / JCM 9639 / NBRC 100938).